A 585-amino-acid chain; its full sequence is 2-succinyl-5-enolpyruvyl-6-hydroxy-3-cyclohexene-1-carboxylate synthase (585 aa).

Belongs to the TPP enzyme family. MenD subfamily. Homodimer. Mg(2+) serves as cofactor. The cofactor is Mn(2+). Requires thiamine diphosphate as cofactor.

The enzyme catalyses isochorismate + 2-oxoglutarate + H(+) = 5-enolpyruvoyl-6-hydroxy-2-succinyl-cyclohex-3-ene-1-carboxylate + CO2. The protein operates within quinol/quinone metabolism; 1,4-dihydroxy-2-naphthoate biosynthesis; 1,4-dihydroxy-2-naphthoate from chorismate: step 2/7. Its pathway is cofactor biosynthesis; phylloquinone biosynthesis. Its function is as follows. Catalyzes the thiamine diphosphate-dependent decarboxylation of 2-oxoglutarate and the subsequent addition of the resulting succinic semialdehyde-thiamine pyrophosphate anion to isochorismate to yield 2-succinyl-5-enolpyruvyl-6-hydroxy-3-cyclohexene-1-carboxylate (SEPHCHC). In Crocosphaera subtropica (strain ATCC 51142 / BH68) (Cyanothece sp. (strain ATCC 51142)), this protein is 2-succinyl-5-enolpyruvyl-6-hydroxy-3-cyclohexene-1-carboxylate synthase.